Consider the following 642-residue polypeptide: Threonine--tRNA ligase (642 aa).

Positions M1–T61 constitute a TGS domain. Residues D243–P534 are catalytic. Residues C334, H385, and H511 each coordinate Zn(2+).

Belongs to the class-II aminoacyl-tRNA synthetase family. In terms of assembly, homodimer. The cofactor is Zn(2+).

The protein localises to the cytoplasm. It carries out the reaction tRNA(Thr) + L-threonine + ATP = L-threonyl-tRNA(Thr) + AMP + diphosphate + H(+). In terms of biological role, catalyzes the attachment of threonine to tRNA(Thr) in a two-step reaction: L-threonine is first activated by ATP to form Thr-AMP and then transferred to the acceptor end of tRNA(Thr). Also edits incorrectly charged L-seryl-tRNA(Thr). The polypeptide is Threonine--tRNA ligase (Shewanella sp. (strain ANA-3)).